Reading from the N-terminus, the 409-residue chain is FAD-dependent monooxygenase phnB (409 aa).

FAD contacts are provided by Glu35, Ala50, Arg110, and Asp311.

It belongs to the paxM FAD-dependent monooxygenase family. FAD serves as cofactor.

The enzyme catalyses 3,6,7,9-tetrahydroxy-3-methyl-2,3-dihydro-1H-naphtho[2,1-b]pyran-1-one + NADPH + O2 + H(+) = 2,3,4,7,9-pentahydroxy-6-methyl-1H-phenalen-1-one + NADP(+) + 2 H2O. It functions in the pathway secondary metabolite biosynthesis. FAD-dependent monooxygenase; part of the gene cluster that mediates the biosynthesis of phenalenones such as herqueinone, compounds that have been reported to treat tumors, bacterial infections and/or mycoses, and rheumatic diseases. The non-reducing polyketide synthase phnA synthesizes the heptaketide backbone and cyclizes it into the angular, hemiketal-containing naphtho-gamma-pyrone prephenalenone. The product template (PT) domain of phnA catalyzes only the C4-C9 aldol condensation, which is unprecedented among known PT domains. The transformation of prephenalenone to phenalenones requires an FAD-dependent monooxygenase phnB, which catalyzes the C2 aromatic hydroxylation of prephenalenone and ring opening of the gamma-pyrone ring simultaneously. Subsequent intramolecular deprotonation of C3 phenolic oxygen accelerates phenalenone ring closure to yield the tricyclic phenalenone core with a C2 hydroxylation. The prenyltransferase phnF further catalyzes reverse C-prenylation of phenalenone by direct electrophilic substitution at C6, or possibly via first a forward O-prenylation of a neighboring phenol in phenalenone, followed by a Claisen rearrangement. The hydroalkoxylation enzyme phnH catalyzes the 5-exo-trig cyclization via acid catalysis after the spontaneous deprotonation of 7-OH, which leads to the formation of the dihydrobenzofuran atrovenetin. Atrovenetin is further converted to deoxyherqueinone by the O-methyltransferase phnC which can methylate C2-OH to stabilize the northern portion of the phenalenone core. Finally, the oxidoreductase phnG converts deoxyherqueinone to herqueinone via C6 hydroxylation. This chain is FAD-dependent monooxygenase phnB, found in Penicillium herquei.